A 217-amino-acid chain; its full sequence is ATP-dependent Clp protease proteolytic subunit (217 aa).

S119 (nucleophile) is an active-site residue. H144 is an active-site residue.

It belongs to the peptidase S14 family. In terms of assembly, fourteen ClpP subunits assemble into 2 heptameric rings which stack back to back to give a disk-like structure with a central cavity, resembling the structure of eukaryotic proteasomes.

It localises to the cytoplasm. It catalyses the reaction Hydrolysis of proteins to small peptides in the presence of ATP and magnesium. alpha-casein is the usual test substrate. In the absence of ATP, only oligopeptides shorter than five residues are hydrolyzed (such as succinyl-Leu-Tyr-|-NHMec, and Leu-Tyr-Leu-|-Tyr-Trp, in which cleavage of the -Tyr-|-Leu- and -Tyr-|-Trp bonds also occurs).. Cleaves peptides in various proteins in a process that requires ATP hydrolysis. Has a chymotrypsin-like activity. Plays a major role in the degradation of misfolded proteins. In Bordetella petrii (strain ATCC BAA-461 / DSM 12804 / CCUG 43448), this protein is ATP-dependent Clp protease proteolytic subunit.